The primary structure comprises 531 residues: Acyl-CoA ligase azaF (531 aa).

AMP is bound at residue 188-199 (RLFSSGTTGLPK). Positions 449–525 (EVEGVLRNHP…DAIPRNASGK (77 aa)) are AMP-binding.

The protein belongs to the ATP-dependent AMP-binding enzyme family.

It participates in secondary metabolite biosynthesis. Functionally, acyl-CoA ligase; part of the gene cluster that mediates the biosynthesis of azaphilones, a class of fungal metabolites characterized by a highly oxygenated pyrano-quinone bicyclic core and exhibiting a broad range of bioactivities. In the first step, the non-reducing polyketide synthase azaA forms the hexaketide precursor from successive condensations of five malonyl-CoA units, presumably with a simple acetyl-CoA starter unit. The reactive polyketide chain then undergoes a PT-mediated C2-C7 cyclization to afford the aromatic ring and is eventually released as an aldehyde through the R-domain. The putative ketoreductase azaE is proposed to catalyze the reduction of the terminal ketone resulting in the early culture product FK17-P2a. The monooxygenase azaH was demonstrated to be the only enzyme required to convert FK17-P2a to azanigerone E. AzaH first hydroxylates the benzaldehyde intermediate FK17-P2a at C4, which triggers the formation of the pyran-ring to afford azanigerone E. In parallel, the 2,4-dimethylhexanoyl chain is synthesized by the HR-PKS azaB and is proposed to be transferred to the C4-hydroxyl of azanigerone E by the acyltransferase azaD directly from the ACP domain of azaB. Alternatively, the 2,4-dimethyl-hexanoyl chain may be offloaded from the HR-PKS as a carboxylic acid and converted to an acyl-CoA by azaF. The resulting acyl-CoA molecule could then be taken up as a substrate by AzaD to form azanigerone B. To yield the carboxylic acid substituent in azanigerone A, the hydroxypropyl side chain of azanigerone B would need to undergo a C-C oxidative cleavage catalyzed by cytochrome P450 AzaI. AzaI is proposed to act on a vicinal diol that leads to a C-C bond scission either through an alkoxyradical intermediate or a peroxy complex. In the biosynthesis of azanigerone A, azanigerone B first undergoes hydroxylation at C10, possibly catalyzed by one of the two FAD-dependent monooxygenases encoded in the cluster, azaG or azaL, resulting in the vicinal diol azanigerone C. Oxidative cleavage of azanigerone C by azaI would yield the corresponding aldehyde derivative of azanigerone A. Finally, the dehydrogenase azaJ is proposed to convert the aldehyde functional group into the carboxylic acid, completing the conversion from azanigerone B to azanigerone A. Alternatively, the oxidation of aldehyde to carboxylic acid may be catalyzed by the same P450 enzyme azaI via consecutive oxidation or by endogenous alcohol dehydrogenase. The polypeptide is Acyl-CoA ligase azaF (Aspergillus niger (strain ATCC 1015 / CBS 113.46 / FGSC A1144 / LSHB Ac4 / NCTC 3858a / NRRL 328 / USDA 3528.7)).